The primary structure comprises 304 residues: Non-specific ribonucleoside hydrolase RihC (304 aa).

The active site involves His-233.

Belongs to the IUNH family. RihC subfamily.

Hydrolyzes both purine and pyrimidine ribonucleosides with a broad-substrate specificity. The sequence is that of Non-specific ribonucleoside hydrolase RihC from Escherichia coli O139:H28 (strain E24377A / ETEC).